A 369-amino-acid chain; its full sequence is 2-aminoethylphosphonate--pyruvate transaminase (369 aa).

Lys193 is subject to N6-(pyridoxal phosphate)lysine.

This sequence belongs to the class-V pyridoxal-phosphate-dependent aminotransferase family. PhnW subfamily. In terms of assembly, homodimer. It depends on pyridoxal 5'-phosphate as a cofactor.

It carries out the reaction (2-aminoethyl)phosphonate + pyruvate = phosphonoacetaldehyde + L-alanine. In terms of biological role, involved in phosphonate degradation. This is 2-aminoethylphosphonate--pyruvate transaminase from Burkholderia mallei (strain NCTC 10247).